A 98-amino-acid chain; its full sequence is NADH-ubiquinone oxidoreductase chain 4L (98 aa).

3 helical membrane-spanning segments follow: residues 1 to 21, 29 to 49, and 61 to 81; these read MSMV…GLLM, SLLC…MTIL, and IILL…LVMV.

It belongs to the complex I subunit 4L family. As to quaternary structure, core subunit of respiratory chain NADH dehydrogenase (Complex I) which is composed of 45 different subunits.

Its subcellular location is the mitochondrion inner membrane. It carries out the reaction a ubiquinone + NADH + 5 H(+)(in) = a ubiquinol + NAD(+) + 4 H(+)(out). In terms of biological role, core subunit of the mitochondrial membrane respiratory chain NADH dehydrogenase (Complex I) which catalyzes electron transfer from NADH through the respiratory chain, using ubiquinone as an electron acceptor. Part of the enzyme membrane arm which is embedded in the lipid bilayer and involved in proton translocation. The chain is NADH-ubiquinone oxidoreductase chain 4L (MT-ND4L) from Arctocephalus australis (South American fur seal).